We begin with the raw amino-acid sequence, 328 residues long: MNLTKMAVFAASLFCLACKNDIDTELEKKSIPESEIQKSEEKLPNEEELTPTDPDEETNKEETVTANATYDFTGNTPPPAPQGMKWVKISQLSDEFNNGFNTDKWTKSLWNYGVPVQMKAENSGVSDGKLWIKATLGNDPERWFETSRVMSKAQVNYPMYTVSRIKGAHISAYNTFWLNNGNISNRNEIDVIENNSNPSCNCQPDFPWQMNSQYFHVVNDDTKRNKGNFDNRELSDANPLKGVAWNEEYHTFGVWWKDATHIQFYLDGEPAGSVVSARDFTRELNIIWDLWTVDADWLGGLAKKEHLSNNNINTMKIDWIHTYQLVEE.

Positions 1–17 (MNLTKMAVFAASLFCLA) are cleaved as a signal peptide. A propeptide spanning residues 18–67 (CKNDIDTELEKKSIPESEIQKSEEKLPNEEELTPTDPDEETNKEETVTAN) is cleaved from the precursor. A compositionally biased stretch (basic and acidic residues) spans 26–45 (LEKKSIPESEIQKSEEKLPN). Residues 26 to 61 (LEKKSIPESEIQKSEEKLPNEEELTPTDPDEETNKE) form a disordered region. The span at 46–59 (EEELTPTDPDEETN) shows a compositional bias: acidic residues. Residues 70–328 (YDFTGNTPPP…WIHTYQLVEE (259 aa)) form the GH16 domain. Residues Trp-110, 119–129 (KAENSGVSDGK), 133–135 (KAT), Glu-188, Glu-193, and Arg-224 contribute to the substrate site. Glu-188 functions as the Nucleophile in the catalytic mechanism. Glu-193 (proton donor) is an active-site residue.

The protein belongs to the glycosyl hydrolase 16 family.

It is found in the secreted. It carries out the reaction Hydrolysis of (1-&gt;4)-beta-D-galactosidic linkages in agarose, giving the tetramer as the predominant product.. Cleaves the beta-1,4-linkages between beta-D-galactose and alpha-L-3,6-anhydro-galactose residues in agarose. Cleaves agarose in a random manner with retention of the anomeric-bond configuration, producing beta-anomers that give rise progressively to alpha-anomers when mutarotation takes place. This Zobellia galactanivorans (strain DSM 12802 / CCUG 47099 / CIP 106680 / NCIMB 13871 / Dsij) protein is Beta-agarase C (agaC).